Consider the following 501-residue polypeptide: Cytochrome P450 monooxygenase 76AD131 (501 aa).

Residues 1-21 (MGYYAIFAVVLPFLWTCFYLL) traverse the membrane as a helical segment. N-linked (GlcNAc...) asparagine glycosylation is found at Asn115 and Asn264. Cys444 serves as a coordination point for heme.

It belongs to the cytochrome P450 family. Heme is required as a cofactor. In terms of tissue distribution, highly expressed in aerial parts, in both skin and flesh tissues.

Its subcellular location is the membrane. The catalysed reaction is tyramine + reduced [NADPH--hemoprotein reductase] + O2 = dopamine + oxidized [NADPH--hemoprotein reductase] + H2O + H(+). It catalyses the reaction 3-methoxytyramine + reduced [NADPH--hemoprotein reductase] + O2 = 3,4-dihydroxy-5-methoxyphenethylamine + oxidized [NADPH--hemoprotein reductase] + H2O + H(+). It participates in aromatic compound metabolism. Its pathway is alkaloid biosynthesis. In terms of biological role, cytochrome P450 monooxygenase participating in the biosynthesis of natural products derived from phenylethylamine, including mescaline, a natural hallucinogen potentially used in psychotherapeutic treatments. Catalyzes the hydroxylation of tyramine to dopamine and of 3-methoxytyramine to 3,4-dihydroxy-5-methoxyphenethylamine. The protein is Cytochrome P450 monooxygenase 76AD131 of Lophophora williamsii (Peyote).